We begin with the raw amino-acid sequence, 112 residues long: 2Fe-2S ferredoxin (112 aa).

One can recognise a 2Fe-2S ferredoxin-type domain in the interval 5–107 (IKVTFIINDE…GIKVRLPSAT (103 aa)). The [2Fe-2S] cluster site is built by C42, C48, C51, and C88.

This sequence belongs to the adrenodoxin/putidaredoxin family. The cofactor is [2Fe-2S] cluster.

Functionally, ferredoxin are iron-sulfur proteins that transfer electrons in a wide variety of metabolic reactions. This Rickettsia prowazekii (strain Madrid E) protein is 2Fe-2S ferredoxin (fdxB).